The primary structure comprises 121 residues: Small ribosomal subunit protein uS13 (121 aa).

Residues 92-121 (RKGLPVRGQRTKTNARTRKGPRKSGVQLKK) are disordered.

The protein belongs to the universal ribosomal protein uS13 family. In terms of assembly, part of the 30S ribosomal subunit. Forms a loose heterodimer with protein S19. Forms two bridges to the 50S subunit in the 70S ribosome.

In terms of biological role, located at the top of the head of the 30S subunit, it contacts several helices of the 16S rRNA. In the 70S ribosome it contacts the 23S rRNA (bridge B1a) and protein L5 of the 50S subunit (bridge B1b), connecting the 2 subunits; these bridges are implicated in subunit movement. Contacts the tRNAs in the A and P-sites. This is Small ribosomal subunit protein uS13 from Polynucleobacter asymbioticus (strain DSM 18221 / CIP 109841 / QLW-P1DMWA-1) (Polynucleobacter necessarius subsp. asymbioticus).